The sequence spans 389 residues: 8-amino-7-oxononanoate synthase (389 aa).

Arg18 lines the substrate pocket. Gly104–Tyr105 provides a ligand contact to pyridoxal 5'-phosphate. His129 serves as a coordination point for substrate. Residues Ser176, His204, and Thr232 each contribute to the pyridoxal 5'-phosphate site. Lys235 carries the N6-(pyridoxal phosphate)lysine modification. Thr351 is a binding site for substrate.

This sequence belongs to the class-II pyridoxal-phosphate-dependent aminotransferase family. BioF subfamily. As to quaternary structure, homodimer. It depends on pyridoxal 5'-phosphate as a cofactor.

The catalysed reaction is 6-carboxyhexanoyl-[ACP] + L-alanine + H(+) = (8S)-8-amino-7-oxononanoate + holo-[ACP] + CO2. It functions in the pathway cofactor biosynthesis; biotin biosynthesis. Catalyzes the decarboxylative condensation of pimeloyl-[acyl-carrier protein] and L-alanine to produce 8-amino-7-oxononanoate (AON), [acyl-carrier protein], and carbon dioxide. The polypeptide is 8-amino-7-oxononanoate synthase (Citrifermentans bemidjiense (strain ATCC BAA-1014 / DSM 16622 / JCM 12645 / Bem) (Geobacter bemidjiensis)).